Here is a 506-residue protein sequence, read N- to C-terminus: Glutamate--tRNA ligase (506 aa).

The 'HIGH' region signature appears at Pro-24–Gly-34. Zn(2+)-binding residues include Cys-121, Cys-123, Cys-148, and His-150. A 'KMSKS' region motif is present at residues Lys-266 to Arg-270. Lys-269 contacts ATP.

The protein belongs to the class-I aminoacyl-tRNA synthetase family. Glutamate--tRNA ligase type 1 subfamily. Monomer. The cofactor is Zn(2+).

The protein localises to the cytoplasm. The catalysed reaction is tRNA(Glu) + L-glutamate + ATP = L-glutamyl-tRNA(Glu) + AMP + diphosphate. In terms of biological role, catalyzes the attachment of glutamate to tRNA(Glu) in a two-step reaction: glutamate is first activated by ATP to form Glu-AMP and then transferred to the acceptor end of tRNA(Glu). The chain is Glutamate--tRNA ligase from Borrelia recurrentis (strain A1).